Here is a 692-residue protein sequence, read N- to C-terminus: Elongation factor G (692 aa).

A tr-type G domain is found at 9–284 (EKIRNIGIMA…AVVDYLPSPV (276 aa)). GTP-binding positions include 18 to 25 (AHIDAGKT), 82 to 86 (DTPGH), and 136 to 139 (NKMD).

This sequence belongs to the TRAFAC class translation factor GTPase superfamily. Classic translation factor GTPase family. EF-G/EF-2 subfamily.

The protein resides in the cytoplasm. Functionally, catalyzes the GTP-dependent ribosomal translocation step during translation elongation. During this step, the ribosome changes from the pre-translocational (PRE) to the post-translocational (POST) state as the newly formed A-site-bound peptidyl-tRNA and P-site-bound deacylated tRNA move to the P and E sites, respectively. Catalyzes the coordinated movement of the two tRNA molecules, the mRNA and conformational changes in the ribosome. This is Elongation factor G from Neorickettsia sennetsu (strain ATCC VR-367 / Miyayama) (Ehrlichia sennetsu).